A 385-amino-acid chain; its full sequence is Trehalose-phosphate phosphatase A (385 aa).

Residues 1–21 (MDMKSGHSSPVMTDSPPISNS) are disordered.

Belongs to the trehalose phosphatase family. The cofactor is a divalent metal cation. Expressed in flowers.

The catalysed reaction is alpha,alpha-trehalose 6-phosphate + H2O = alpha,alpha-trehalose + phosphate. The protein operates within glycan biosynthesis; trehalose biosynthesis. Functionally, removes the phosphate from trehalose 6-phosphate to produce free trehalose. Trehalose accumulation in plant may improve abiotic stress tolerance. This Arabidopsis thaliana (Mouse-ear cress) protein is Trehalose-phosphate phosphatase A (TPPA).